The following is a 356-amino-acid chain: Geranylgeranyl pyrophosphate synthase penG (356 aa).

Isopentenyl diphosphate contacts are provided by Lys-83, Arg-86, and His-115. Mg(2+)-binding residues include Asp-122 and Asp-126. Arg-131 contributes to the dimethylallyl diphosphate binding site. Position 132 (Arg-132) interacts with isopentenyl diphosphate. Dimethylallyl diphosphate is bound by residues Lys-209, Thr-210, and Gln-243. Residue Asp-246 coordinates Mg(2+). Residues Asn-250, Lys-260, and Lys-270 each contribute to the dimethylallyl diphosphate site.

Belongs to the FPP/GGPP synthase family. Mg(2+) is required as a cofactor.

The enzyme catalyses isopentenyl diphosphate + dimethylallyl diphosphate = (2E)-geranyl diphosphate + diphosphate. It catalyses the reaction isopentenyl diphosphate + (2E)-geranyl diphosphate = (2E,6E)-farnesyl diphosphate + diphosphate. The catalysed reaction is isopentenyl diphosphate + (2E,6E)-farnesyl diphosphate = (2E,6E,10E)-geranylgeranyl diphosphate + diphosphate. It functions in the pathway secondary metabolite biosynthesis. Functionally, geranylgeranyl pyrophosphate synthase; part of the gene cluster that mediates the biosynthesis of the indole diterpenes penitrems. The geranylgeranyl diphosphate (GGPP) synthase ptmG catalyzes the first step in penitrem biosynthesis via conversion of farnesyl pyrophosphate and isopentyl pyrophosphate into geranylgeranyl pyrophosphate (GGPP). Condensation of indole-3-glycerol phosphate with GGPP by the prenyl transferase ptmC then forms 3-geranylgeranylindole (3-GGI). Epoxidation by the FAD-dependent monooxygenase ptmM leads to a epoxidized-GGI that is substrate of the terpene cyclase ptmB for cyclization to yield paspaline. Paspaline is subsequently converted to 13-desoxypaxilline by the cytochrome P450 monooxygenase ptmP, the latter being then converted to paxilline by the cytochrome P450 monooxygenase ptmQ. Paxilline is converted to beta-paxitriol via C-10 ketoreduction by the short-chain dehydrogenase ptmH which can be monoprenylated at the C-20 by the indole diterpene prenyltransferase ptmD. A two-step elimination (acetylation and elimination) process performed by the O-acetyltransferase ptmV and ptmI leads to the production of the prenylated form of penijanthine. The FAD-linked oxidoreductase ptmO then converts the prenylated form of penijanthine into PC-M5 which is in turn transformed into PC-M4 by the aromatic dimethylallyltransferase ptmE. Five sequential oxidative transformations performed by the cytochrome P450 monooxygenases ptmK, ptmU, ptmL, ptmN and ptmJ yield the various penitrem compounds. PtmK, ptmU and ptmM are involved in the formation of the key bicyclic ring of penitrem C via the formation of the intermediates secopenitrem D and penitrem D. PtmL catalyzes the epoxidation of penitrem D and C to yield penitrem B and F, respectively. PtmJ catalyzes the last benzylic hydroxylation to convert penitrem B to prenitrem E and penitrem F to penitrem A. The polypeptide is Geranylgeranyl pyrophosphate synthase penG (Penicillium ochrochloron).